Here is a 225-residue protein sequence, read N- to C-terminus: 3-dehydroquinate dehydratase (225 aa).

3-dehydroquinate-binding positions include S6, 30-32 (EWR), and R62. The active-site Proton donor/acceptor is H118. The Schiff-base intermediate with substrate role is filled by K143. The 3-dehydroquinate site is built by R186, S205, and Q209.

Belongs to the type-I 3-dehydroquinase family. As to quaternary structure, homodimer.

The enzyme catalyses 3-dehydroquinate = 3-dehydroshikimate + H2O. Its pathway is metabolic intermediate biosynthesis; chorismate biosynthesis; chorismate from D-erythrose 4-phosphate and phosphoenolpyruvate: step 3/7. Its function is as follows. Involved in the third step of the chorismate pathway, which leads to the biosynthesis of aromatic amino acids. Catalyzes the cis-dehydration of 3-dehydroquinate (DHQ) and introduces the first double bond of the aromatic ring to yield 3-dehydroshikimate. The chain is 3-dehydroquinate dehydratase from Streptococcus sanguinis (strain SK36).